A 171-amino-acid chain; its full sequence is Peptide methionine sulfoxide reductase MsrA (171 aa).

Cysteine 13 is a catalytic residue.

Belongs to the MsrA Met sulfoxide reductase family.

It carries out the reaction L-methionyl-[protein] + [thioredoxin]-disulfide + H2O = L-methionyl-(S)-S-oxide-[protein] + [thioredoxin]-dithiol. The enzyme catalyses [thioredoxin]-disulfide + L-methionine + H2O = L-methionine (S)-S-oxide + [thioredoxin]-dithiol. Its function is as follows. Has an important function as a repair enzyme for proteins that have been inactivated by oxidation. Catalyzes the reversible oxidation-reduction of methionine sulfoxide in proteins to methionine. This is Peptide methionine sulfoxide reductase MsrA from Mycolicibacterium paratuberculosis (strain ATCC BAA-968 / K-10) (Mycobacterium paratuberculosis).